Here is a 190-residue protein sequence, read N- to C-terminus: Protein LZIC (190 aa).

The stretch at 2–63 forms a coiled coil; the sequence is ASRGKTETSK…SEFNDSLKKI (62 aa).

It belongs to the CTNNBIP1 family. Does not interact with CTNNB1. In terms of tissue distribution, ubiquitously expressed, with highest levels in kidney. Up-regulated in several cases of gastric cancers.

The protein is Protein LZIC (LZIC) of Homo sapiens (Human).